We begin with the raw amino-acid sequence, 469 residues long: Neuraminidase (469 aa).

The Intravirion segment spans residues Met-1–Thr-9. The helical transmembrane segment at Ile-10–Val-30 threads the bilayer. Residues Gly-11–Val-33 form an involved in apical transport and lipid raft association region. Residues Thr-31–Ile-469 are Virion surface-facing. The interval His-36–Ser-88 is hypervariable stalk region. 3 N-linked (GlcNAc...) asparagine; by host glycosylation sites follow: Asn-61, Asn-70, and Asn-86. A head of neuraminidase region spans residues Gln-91–Ile-469. Disulfide bonds link Cys-92–Cys-417, Cys-124–Cys-129, Cys-183–Cys-230, Cys-232–Cys-237, Cys-278–Cys-291, Cys-280–Cys-289, Cys-318–Cys-337, and Cys-421–Cys-447. Arg-118 contributes to the substrate binding site. The N-linked (GlcNAc...) asparagine; by host glycan is linked to Asn-146. Asp-151 serves as the catalytic Proton donor/acceptor. Arg-152 provides a ligand contact to substrate. Asn-200 and Asn-234 each carry an N-linked (GlcNAc...) asparagine; by host glycan. Residue Glu-276 to Glu-277 participates in substrate binding. A substrate-binding site is contributed by Arg-292. The Ca(2+) site is built by Asp-293, Gly-297, and Asp-324. A substrate-binding site is contributed by Arg-371. Asn-402 is a glycosylation site (N-linked (GlcNAc...) asparagine; by host). Catalysis depends on Tyr-406, which acts as the Nucleophile.

This sequence belongs to the glycosyl hydrolase 34 family. In terms of assembly, homotetramer. Ca(2+) serves as cofactor. Post-translationally, N-glycosylated.

The protein resides in the virion membrane. The protein localises to the host apical cell membrane. The catalysed reaction is Hydrolysis of alpha-(2-&gt;3)-, alpha-(2-&gt;6)-, alpha-(2-&gt;8)- glycosidic linkages of terminal sialic acid residues in oligosaccharides, glycoproteins, glycolipids, colominic acid and synthetic substrates.. Its activity is regulated as follows. Inhibited by the neuraminidase inhibitors zanamivir (Relenza) and oseltamivir (Tamiflu). These drugs interfere with the release of progeny virus from infected cells and are effective against all influenza strains. Resistance to neuraminidase inhibitors is quite rare. Catalyzes the removal of terminal sialic acid residues from viral and cellular glycoconjugates. Cleaves off the terminal sialic acids on the glycosylated HA during virus budding to facilitate virus release. Additionally helps virus spread through the circulation by further removing sialic acids from the cell surface. These cleavages prevent self-aggregation and ensure the efficient spread of the progeny virus from cell to cell. Otherwise, infection would be limited to one round of replication. Described as a receptor-destroying enzyme because it cleaves a terminal sialic acid from the cellular receptors. May facilitate viral invasion of the upper airways by cleaving the sialic acid moieties on the mucin of the airway epithelial cells. Likely to plays a role in the budding process through its association with lipid rafts during intracellular transport. May additionally display a raft-association independent effect on budding. Plays a role in the determination of host range restriction on replication and virulence. Sialidase activity in late endosome/lysosome traffic seems to enhance virus replication. In Aves (whales), this protein is Neuraminidase.